The following is a 483-amino-acid chain: V-type proton ATPase subunit H (483 aa).

Ser483 carries the phosphoserine modification.

The protein belongs to the V-ATPase H subunit family. V-ATPase is a heteromultimeric enzyme made up of two complexes: the ATP-hydrolytic V1 complex and the proton translocation V0 complex. The V1 complex consists of three catalytic AB heterodimers that form a heterohexamer, three peripheral stalks each consisting of EG heterodimers, one central rotor including subunits D and F, and the regulatory subunits C and H. The proton translocation complex V0 consists of the proton transport subunit a, a ring of proteolipid subunits c9c'', rotary subunit d, subunits e and f, and the accessory subunits ATP6AP1/Ac45 and ATP6AP2/PRR. Interacts with AP2M1.

It is found in the cytoplasmic vesicle. Its subcellular location is the clathrin-coated vesicle membrane. Its function is as follows. Subunit of the V1 complex of vacuolar(H+)-ATPase (V-ATPase), a multisubunit enzyme composed of a peripheral complex (V1) that hydrolyzes ATP and a membrane integral complex (V0) that translocates protons. V-ATPase is responsible for acidifying and maintaining the pH of intracellular compartments and in some cell types, is targeted to the plasma membrane, where it is responsible for acidifying the extracellular environment. Subunit H is essential for V-ATPase activity, but not for the assembly of the complex. Involved in the endocytosis mediated by clathrin-coated pits, required for the formation of endosomes. This is V-type proton ATPase subunit H (ATP6V1H) from Sus scrofa (Pig).